Reading from the N-terminus, the 115-residue chain is Toxin CSTX-9 (115 aa).

Positions 1–20 (MKVLVICAVLFLAIFSNSSA) are cleaved as a signal peptide. The propeptide occupies 21 to 47 (ETEDDFLEDESFEADDVIPFLAREQVR). 4 disulfides stabilise this stretch: Cys-53–Cys-68, Cys-60–Cys-77, Cys-67–Cys-95, and Cys-79–Cys-93.

This sequence belongs to the neurotoxin 19 (CSTX) family. As to quaternary structure, monomer. Interacts with CSTX-13 (AC P83919) (Kd=370 nM), but does not interact with CSTX-1 (AC P81694). In terms of tissue distribution, expressed by the venom gland.

It localises to the secreted. Its subcellular location is the target cell membrane. In terms of biological role, synergistic toxin that induces or increases a cytolytic effect when combined with CSTX-1 (AC P81694) or CSTX-13 (AC P83919). Potassium ions and M-ctenitoxin-Cs1a (AC P83619) have also an effect on its activity. When alone, has no insecticidal activity. The protein is Toxin CSTX-9 of Cupiennius salei (American wandering spider).